Reading from the N-terminus, the 366-residue chain is Glutathione S-transferase omega-like 3 (366 aa).

Cys46 is a catalytic residue. Positions 197-349 constitute a GST C-terminal domain; the sequence is PRSLEAQITE…LGYTRSQPRV (153 aa).

This sequence belongs to the GST superfamily. Omega family.

The protein localises to the cytoplasm. It catalyses the reaction RX + glutathione = an S-substituted glutathione + a halide anion + H(+). Its function is as follows. Active as '1-Cys' thiol transferase against beta-hydroxyethyl disulfide (HED), as dehydroascorbate reductase and as dimethylarsinic acid reductase, while not active against the standard GST substrate 1-chloro-2,4-dinitrobenzene (CDNB). The chain is Glutathione S-transferase omega-like 3 (GTO3) from Saccharomyces cerevisiae (strain ATCC 204508 / S288c) (Baker's yeast).